The sequence spans 194 residues: Large ribosomal subunit protein uL6m (194 aa).

Belongs to the universal ribosomal protein uL6 family.

It localises to the mitochondrion. The chain is Large ribosomal subunit protein uL6m (RPL6) from Prototheca wickerhamii.